A 249-amino-acid polypeptide reads, in one-letter code: 5'-nucleotidase SurE (249 aa).

Residues aspartate 8, aspartate 9, serine 39, and asparagine 91 each coordinate a divalent metal cation.

Belongs to the SurE nucleotidase family. A divalent metal cation serves as cofactor.

The protein resides in the cytoplasm. The catalysed reaction is a ribonucleoside 5'-phosphate + H2O = a ribonucleoside + phosphate. Its function is as follows. Nucleotidase that shows phosphatase activity on nucleoside 5'-monophosphates. This chain is 5'-nucleotidase SurE, found in Pseudomonas fluorescens (strain Pf0-1).